The chain runs to 456 residues: Signal recognition particle 54 kDa protein (456 aa).

Residues 104-111 (GLYGNGKT), 184-188 (DTSGR), and 242-245 (TKMD) each bind GTP.

Belongs to the GTP-binding SRP family. SRP54 subfamily. In terms of assembly, part of the signal recognition particle protein translocation system, which is composed of SRP and FtsY. Archaeal SRP consists of a 7S RNA molecule of 300 nucleotides and two protein subunits: SRP54 and SRP19.

The protein localises to the cytoplasm. It catalyses the reaction GTP + H2O = GDP + phosphate + H(+). In terms of biological role, involved in targeting and insertion of nascent membrane proteins into the cytoplasmic membrane. Binds to the hydrophobic signal sequence of the ribosome-nascent chain (RNC) as it emerges from the ribosomes. The SRP-RNC complex is then targeted to the cytoplasmic membrane where it interacts with the SRP receptor FtsY. This is Signal recognition particle 54 kDa protein from Thermoplasma acidophilum (strain ATCC 25905 / DSM 1728 / JCM 9062 / NBRC 15155 / AMRC-C165).